The following is a 499-amino-acid chain: Hexokinase-2, chloroplastic (499 aa).

The transit peptide at 1 to 30 (MSVTVSSPAGRSFHISRSPYKKISKPRVII) directs the protein to the chloroplast. The region spanning 39 to 490 (LAVAPILTKL…SGIGAALLAA (452 aa)) is the Hexokinase domain. Residues 94 to 232 (TGNEKGLFYA…GLGMQVSALV (139 aa)) are hexokinase small subdomain. 3 residues coordinate ADP: Gly-108, Thr-109, and Asn-110. The D-glucose site is built by Thr-198, Lys-199, Asn-233, and Asp-234. Positions 233–479 (NDTVATLAGA…KNVVIEHSKD (247 aa)) are hexokinase large subdomain. An ADP-binding site is contributed by Thr-257. D-glucose-binding residues include Asn-260, Glu-288, and Glu-318. ADP is bound at residue Gly-444.

It belongs to the hexokinase family. Expressed in vascular starch sheath, xylem parenchyma, guard cells and root tips.

Its subcellular location is the plastid. It is found in the chloroplast stroma. It carries out the reaction a D-hexose + ATP = a D-hexose 6-phosphate + ADP + H(+). The enzyme catalyses D-fructose + ATP = D-fructose 6-phosphate + ADP + H(+). It catalyses the reaction D-glucose + ATP = D-glucose 6-phosphate + ADP + H(+). It participates in carbohydrate metabolism; hexose metabolism. Its pathway is carbohydrate degradation; glycolysis; D-glyceraldehyde 3-phosphate and glycerone phosphate from D-glucose: step 1/4. Fructose and glucose phosphorylating enzyme. This Nicotiana tabacum (Common tobacco) protein is Hexokinase-2, chloroplastic (HXK2).